A 329-amino-acid polypeptide reads, in one-letter code: GMP reductase (329 aa).

The active-site Thioimidate intermediate is C178. 207–230 (VIADGGIRTHGDIAKSIRMGATMV) serves as a coordination point for NADP(+).

The protein belongs to the IMPDH/GMPR family. GuaC type 2 subfamily.

It carries out the reaction IMP + NH4(+) + NADP(+) = GMP + NADPH + 2 H(+). Functionally, catalyzes the irreversible NADPH-dependent deamination of GMP to IMP. It functions in the conversion of nucleobase, nucleoside and nucleotide derivatives of G to A nucleotides, and in maintaining the intracellular balance of A and G nucleotides. This chain is GMP reductase, found in Lactococcus lactis subsp. cremoris (strain SK11).